An 832-amino-acid polypeptide reads, in one-letter code: Leucine--tRNA ligase (832 aa).

A 'HIGH' region motif is present at residues Pro58–His68. Residues Ala598–Ser602 carry the 'KMSKS' region motif. Lys601 contacts ATP.

This sequence belongs to the class-I aminoacyl-tRNA synthetase family.

Its subcellular location is the cytoplasm. The enzyme catalyses tRNA(Leu) + L-leucine + ATP = L-leucyl-tRNA(Leu) + AMP + diphosphate. This Acidothermus cellulolyticus (strain ATCC 43068 / DSM 8971 / 11B) protein is Leucine--tRNA ligase.